The following is an 842-amino-acid chain: Protein translocase subunit SecA (842 aa).

ATP-binding positions include glutamine 85, 103-107 (GEGKT), and aspartate 493. Positions 825, 827, 836, and 837 each coordinate Zn(2+).

The protein belongs to the SecA family. In terms of assembly, monomer and homodimer. Part of the essential Sec protein translocation apparatus which comprises SecA, SecYEG and auxiliary proteins SecDF. Other proteins may also be involved. Zn(2+) is required as a cofactor.

The protein localises to the cell membrane. Its subcellular location is the cytoplasm. The enzyme catalyses ATP + H2O + cellular proteinSide 1 = ADP + phosphate + cellular proteinSide 2.. In terms of biological role, part of the Sec protein translocase complex. Interacts with the SecYEG preprotein conducting channel. Has a central role in coupling the hydrolysis of ATP to the transfer of proteins into and across the cell membrane, serving as an ATP-driven molecular motor driving the stepwise translocation of polypeptide chains across the membrane. The sequence is that of Protein translocase subunit SecA from Streptococcus uberis (strain ATCC BAA-854 / 0140J).